We begin with the raw amino-acid sequence, 62 residues long: Small, acid-soluble spore protein A (62 aa).

The protein belongs to the alpha/beta-type SASP family.

SASP are bound to spore DNA. They are double-stranded DNA-binding proteins that cause DNA to change to an a-like conformation. They protect the DNA backbone from chemical and enzymatic cleavage and are thus involved in dormant spore's high resistance to UV light. In Priestia megaterium (Bacillus megaterium), this protein is Small, acid-soluble spore protein A (sasP-A).